A 462-amino-acid polypeptide reads, in one-letter code: Gamma-aminobutyric acid receptor subunit alpha-5 (462 aa).

Positions 1-31 are cleaved as a signal peptide; it reads MDNGMFSSFIMIKNLLLFCISMNLASHFGFS. Residues 32–260 are Extracellular-facing; sequence QMPTSSVKAE…FHLKRKIGYF (229 aa). The N-linked (GlcNAc...) asparagine glycan is linked to Asn45. Arg101 provides a ligand contact to 4-aminobutanoate. Asn145 carries an N-linked (GlcNAc...) asparagine glycan. Thr164 lines the 4-aminobutanoate pocket. Cys173 and Cys187 are oxidised to a cystine. Residues Asn207 and Asn236 are each glycosylated (N-linked (GlcNAc...) asparagine). The next 3 helical transmembrane spans lie at 261 to 281, 287 to 308, and 319 to 340; these read VIQT…SFWL, PART…ISAR, and AMDW…EFAT. The Cytoplasmic portion of the chain corresponds to 341–427; sequence VNYFTKRGWA…TYNSISKIDK (87 aa). A Glycyl lysine isopeptide (Lys-Gly) (interchain with G-Cter in ubiquitin) cross-link involves residue Lys355. The segment at 375-412 is disordered; the sequence is TNAYTTGKMTHPPNIPKEQTPAGTTNASSASVKPEDKA. A compositionally biased stretch (polar residues) spans 395–405; it reads PAGTTNASSAS. Residues 428-448 form a helical membrane-spanning segment; sequence MSRIIFPLLFGTFNLVYWATY.

Belongs to the ligand-gated ion channel (TC 1.A.9) family. Gamma-aminobutyric acid receptor (TC 1.A.9.5) subfamily. GABRA5 sub-subfamily. In terms of assembly, heteropentamer, formed by a combination of alpha (GABRA1-6), beta (GABRB1-3), gamma (GABRG1-3), delta (GABRD), epsilon (GABRE), rho (GABRR1-3), pi (GABRP) and theta (GABRQ) chains, each subunit exhibiting distinct physiological and pharmacological properties.

It is found in the postsynaptic cell membrane. The protein localises to the cell membrane. The catalysed reaction is chloride(in) = chloride(out). In terms of biological role, alpha subunit of the heteropentameric ligand-gated chloride channel gated by gamma-aminobutyric acid (GABA), a major inhibitory neurotransmitter in the brain. GABA-gated chloride channels, also named GABA(A) receptors (GABAAR), consist of five subunits arranged around a central pore and contain GABA active binding site(s) located at the alpha and beta subunit interface(s). When activated by GABA, GABAARs selectively allow the flow of chloride anions across the cell membrane down their electrochemical gradient. GABAARs containing alpha-5/GABRA5 subunits are mainly extrasynaptic and contribute to the tonic GABAergic inhibition in the hippocampus. Extrasynaptic alpha-5-containing GABAARs in CA1 pyramidal neurons play a role in learning and memory processes. The protein is Gamma-aminobutyric acid receptor subunit alpha-5 (GABRA5) of Bos taurus (Bovine).